The primary structure comprises 1112 residues: Cytosolic carboxypeptidase 4 (1112 aa).

Residues 291 to 345 (TTEPPHDLPEEDFEDDGDDEVDKDSDTEDGKVEDDDLETDVNKLSSKPGLDRPEE) are disordered. Residues 299–329 (PEEDFEDDGDDEVDKDSDTEDGKVEDDDLET) are compositionally biased toward acidic residues. The Peptidase M14 domain maps to 732–1022 (YPYTYTALMT…HPVDGLQGLQ (291 aa)). Positions 804, 807, and 901 each coordinate Zn(2+). The active-site Proton donor/acceptor is the Glu986.

Belongs to the peptidase M14 family. As to quaternary structure, interacts with MYLK. Interacts with TCF4. Zn(2+) is required as a cofactor. In terms of tissue distribution, expressed in corneal endothelium.

It localises to the cytoplasm. It is found in the cytosol. The enzyme catalyses (L-glutamyl)(n+1)-gamma-L-glutamyl-L-glutamyl-[protein] + H2O = (L-glutamyl)(n)-gamma-L-glutamyl-L-glutamyl-[protein] + L-glutamate. It catalyses the reaction C-terminal L-alpha-aminoacyl-L-glutamyl-L-glutamyl-[tubulin] + H2O = C-terminal L-alpha-aminoacyl-L-glutamyl-[tubulin] + L-glutamate. Its function is as follows. Metallocarboxypeptidase that mediates deglutamylation of tubulin and non-tubulin target proteins. Catalyzes the removal of polyglutamate side chains present on the gamma-carboxyl group of glutamate residues within the C-terminal tail of tubulin protein. Specifically cleaves tubulin long-side-chains, while it is not able to remove the branching point glutamate. Also catalyzes the removal of polyglutamate residues from the carboxy-terminus of non-tubulin proteins such as MYLK. This Homo sapiens (Human) protein is Cytosolic carboxypeptidase 4.